The chain runs to 344 residues: sn-glycerol-3-phosphate import ATP-binding protein UgpC 2 (344 aa).

The 231-residue stretch at 4 to 234 (IELIDLKKNY…PETVFVAGFI (231 aa)) folds into the ABC transporter domain. Residue 36 to 43 (GPSGCGKS) coordinates ATP.

The protein belongs to the ABC transporter superfamily. sn-glycerol-3-phosphate importer (TC 3.A.1.1.3) family. As to quaternary structure, the complex is composed of two ATP-binding proteins (UgpC), two transmembrane proteins (UgpA and UgpE) and a solute-binding protein (UgpB).

The protein resides in the cell inner membrane. The enzyme catalyses sn-glycerol 3-phosphate(out) + ATP + H2O = sn-glycerol 3-phosphate(in) + ADP + phosphate + H(+). Its function is as follows. Part of the ABC transporter complex UgpBAEC involved in sn-glycerol-3-phosphate (G3P) import. Responsible for energy coupling to the transport system. This chain is sn-glycerol-3-phosphate import ATP-binding protein UgpC 2, found in Rhizobium johnstonii (strain DSM 114642 / LMG 32736 / 3841) (Rhizobium leguminosarum bv. viciae).